A 406-amino-acid chain; its full sequence is Ribose-phosphate pyrophosphokinase 3, mitochondrial (406 aa).

The tract at residues 1-32 (MAATPHRHLLQPCKNPAISSSETLKPSSSFSL) is disordered. The transit peptide at 1–87 (MAATPHRHLL…RRFQMSSNQE (87 aa)) directs the protein to the mitochondrion. Residues 18 to 32 (ISSSETLKPSSSFSL) are compositionally biased toward low complexity. Residues D226 and H228 each coordinate Mg(2+). Residues 309–324 (GRHVVIVDDLVQSGGT) are binding of phosphoribosylpyrophosphate.

It belongs to the ribose-phosphate pyrophosphokinase family.

It is found in the mitochondrion. It catalyses the reaction D-ribose 5-phosphate + ATP = 5-phospho-alpha-D-ribose 1-diphosphate + AMP + H(+). The sequence is that of Ribose-phosphate pyrophosphokinase 3, mitochondrial (PRS3) from Spinacia oleracea (Spinach).